Reading from the N-terminus, the 146-residue chain is uncharacterized protein (146 aa).

This is an uncharacterized protein from Acidianus filamentous virus 1 (isolate United States/Yellowstone) (AFV-1).